Here is a 149-residue protein sequence, read N- to C-terminus: Cytochrome c-type biogenesis protein CcmE (149 aa).

The Cytoplasmic portion of the chain corresponds to Met-1 to Arg-7. The helical; Signal-anchor for type II membrane protein transmembrane segment at Leu-8–Ala-28 threads the bilayer. Topologically, residues Phe-29 to Lys-149 are periplasmic. Residues His-123 and Tyr-127 each coordinate heme.

It belongs to the CcmE/CycJ family.

It is found in the cell inner membrane. Its function is as follows. Heme chaperone required for the biogenesis of c-type cytochromes. Transiently binds heme delivered by CcmC and transfers the heme to apo-cytochromes in a process facilitated by CcmF and CcmH. This is Cytochrome c-type biogenesis protein CcmE from Polaromonas naphthalenivorans (strain CJ2).